A 440-amino-acid polypeptide reads, in one-letter code: Ribosomal protein uS12 methylthiotransferase RimO (440 aa).

One can recognise an MTTase N-terminal domain in the interval 5 to 116 (PTIAISHLGC…IVNVIERAEQ (112 aa)). The [4Fe-4S] cluster site is built by C14, C50, C79, C154, C158, and C161. The Radical SAM core domain occupies 140–370 (TTTEGVAYLR…ALQQPISWRK (231 aa)). The TRAM domain occupies 372–438 (QQEVGKTVEV…EYDLFGQVVS (67 aa)).

It belongs to the methylthiotransferase family. RimO subfamily. Requires [4Fe-4S] cluster as cofactor.

It is found in the cytoplasm. The enzyme catalyses L-aspartate(89)-[ribosomal protein uS12]-hydrogen + (sulfur carrier)-SH + AH2 + 2 S-adenosyl-L-methionine = 3-methylsulfanyl-L-aspartate(89)-[ribosomal protein uS12]-hydrogen + (sulfur carrier)-H + 5'-deoxyadenosine + L-methionine + A + S-adenosyl-L-homocysteine + 2 H(+). Catalyzes the methylthiolation of an aspartic acid residue of ribosomal protein uS12. This is Ribosomal protein uS12 methylthiotransferase RimO from Trichormus variabilis (strain ATCC 29413 / PCC 7937) (Anabaena variabilis).